The chain runs to 165 residues: Ribonuclease H2 subunit C (165 aa).

Residue methionine 1 is modified to N-acetylmethionine.

This sequence belongs to the RNase H2 subunit C family. In terms of assembly, the RNase H2 complex is a heterotrimer composed of the catalytic subunit RNASEH2A and the non-catalytic subunits RNASEH2B and RNASEH2C.

It localises to the nucleus. In terms of biological role, non catalytic subunit of RNase H2, an endonuclease that specifically degrades the RNA of RNA:DNA hybrids. Participates in DNA replication, possibly by mediating the removal of lagging-strand Okazaki fragment RNA primers during DNA replication. Mediates the excision of single ribonucleotides from DNA:RNA duplexes. The chain is Ribonuclease H2 subunit C (RNASEH2C) from Bos taurus (Bovine).